The primary structure comprises 243 residues: Zinc import ATP-binding protein ZnuC (243 aa).

In terms of domain architecture, ABC transporter spans 8–225; the sequence is LNLSNVSYYI…SEFQKLFGHH (218 aa). 40-47 serves as a coordination point for ATP; it reads GPNGAGKS.

Belongs to the ABC transporter superfamily. Zinc importer (TC 3.A.1.15.5) family. As to quaternary structure, the complex is composed of two ATP-binding proteins (ZnuC), two transmembrane proteins (ZnuB) and a solute-binding protein (ZnuA).

The protein resides in the cell inner membrane. The enzyme catalyses Zn(2+)(out) + ATP(in) + H2O(in) = Zn(2+)(in) + ADP(in) + phosphate(in) + H(+)(in). Functionally, part of the ABC transporter complex ZnuABC involved in zinc import. Responsible for energy coupling to the transport system. The chain is Zinc import ATP-binding protein ZnuC from Psychrobacter cryohalolentis (strain ATCC BAA-1226 / DSM 17306 / VKM B-2378 / K5).